The following is a 308-amino-acid chain: Aspartate carbamoyltransferase catalytic subunit (308 aa).

The carbamoyl phosphate site is built by arginine 57 and threonine 58. Lysine 86 lines the L-aspartate pocket. Carbamoyl phosphate-binding residues include arginine 107, histidine 135, and glutamine 138. Residues arginine 167 and arginine 228 each coordinate L-aspartate. The carbamoyl phosphate site is built by leucine 267 and proline 268.

This sequence belongs to the aspartate/ornithine carbamoyltransferase superfamily. ATCase family. As to quaternary structure, heterooligomer of catalytic and regulatory chains.

The enzyme catalyses carbamoyl phosphate + L-aspartate = N-carbamoyl-L-aspartate + phosphate + H(+). The protein operates within pyrimidine metabolism; UMP biosynthesis via de novo pathway; (S)-dihydroorotate from bicarbonate: step 2/3. Its function is as follows. Catalyzes the condensation of carbamoyl phosphate and aspartate to form carbamoyl aspartate and inorganic phosphate, the committed step in the de novo pyrimidine nucleotide biosynthesis pathway. The protein is Aspartate carbamoyltransferase catalytic subunit of Methanosarcina barkeri (strain Fusaro / DSM 804).